The sequence spans 506 residues: Glucan endo-1,3-beta-glucosidase 13 (506 aa).

The signal sequence occupies residues 1 to 22 (MARDFKLIFSISILLLLLDCCY). N70 carries an N-linked (GlcNAc...) asparagine glycan. The active-site Proton donor is the E119. N127, N175, and N212 each carry an N-linked (GlcNAc...) asparagine glycan. E264 acts as the Nucleophile in catalysis. N-linked (GlcNAc...) asparagine glycosylation is found at N356 and N361. C370 and C433 form a disulfide bridge. 2 N-linked (GlcNAc...) asparagine glycosylation sites follow: N459 and N465. S471 carries GPI-anchor amidated serine lipidation. The propeptide at 472–506 (SASTPRGNELLQWILKLCLMISLFFSLQTMNSQAL) is removed in mature form.

Belongs to the glycosyl hydrolase 17 family. In terms of processing, contains two additional disulfide bonds.

Its subcellular location is the secreted. The protein resides in the cell wall. It localises to the cell membrane. The catalysed reaction is Hydrolysis of (1-&gt;3)-beta-D-glucosidic linkages in (1-&gt;3)-beta-D-glucans.. In Arabidopsis thaliana (Mouse-ear cress), this protein is Glucan endo-1,3-beta-glucosidase 13.